Reading from the N-terminus, the 261-residue chain is High-affinity zinc uptake system membrane protein ZnuB (261 aa).

7 helical membrane passes run A8–W28, V54–L74, T84–L104, T125–W145, I171–I191, V214–F234, and D236–F256.

The protein belongs to the ABC-3 integral membrane protein family.

It localises to the cell inner membrane. Its function is as follows. Involved in the high-affinity zinc uptake transport system. This chain is High-affinity zinc uptake system membrane protein ZnuB (znuB), found in Haemophilus influenzae (strain ATCC 51907 / DSM 11121 / KW20 / Rd).